The sequence spans 713 residues: Signal transducer and activator of transcription 1 (713 aa).

In terms of domain architecture, SH2 spans 477–574; the sequence is WCIGFISKHD…EEMLRYFESE (98 aa).

This sequence belongs to the transcription factor STAT family. Forms a homodimer or a heterodimer with a related family member.

It localises to the cytoplasm. Its subcellular location is the nucleus. In terms of biological role, carries out a dual function: signal transduction and activation of transcription. Activated STAT proteins play a role in repression of dauer formation. Neuronal expression is held in check by negative signals through the TGF-beta pathway that target the daf-3 transcription factor. In Caenorhabditis briggsae, this protein is Signal transducer and activator of transcription 1.